Consider the following 650-residue polypeptide: Exonuclease 3'-5' domain-containing protein 2 (650 aa).

The Mitochondrial intermembrane portion of the chain corresponds to 1–6 (MSRQNL). The chain crosses the membrane as a helical span at residues 7 to 29 (VALTVTTLLGVAMGGFVLWKGIQ). The Cytoplasmic portion of the chain corresponds to 30-650 (RRWSKTSRVM…YGDDLPIKLS (621 aa)). The interval 34–89 (KTSRVMQQQPQQPQQPQQPQPQPQPQPQPQPEHPQPQQQVPGGREWPPPEDDQLPF) is disordered. A compositionally biased stretch (pro residues) spans 49–67 (PQQPQPQPQPQPQPQPEHP). Residues Asp137, Glu139, and Asp275 each contribute to the a divalent metal cation site. The 93-residue stretch at 184-276 (ILADGAILKV…DQVTYAARDA (93 aa)) folds into the 3'-5' exonuclease domain. Positions 340–373 (SQLKPRNRKAKTDRMVPGNNQGRDPRKHKRKPLG) are disordered.

The protein belongs to the EXD2 family. In terms of assembly, homodimer. Interacts with RBBP8, MRE11 and BRCA1. It depends on Mg(2+) as a cofactor. The cofactor is Mn(2+).

Its subcellular location is the mitochondrion outer membrane. It is found in the mitochondrion matrix. The protein resides in the nucleus. It localises to the chromosome. The enzyme catalyses Exonucleolytic cleavage in the 3'- to 5'-direction to yield nucleoside 5'-phosphates.. Its function is as follows. Exonuclease that has both 3'-5' exoribonuclease and exodeoxyribonuclease activities, depending on the divalent metal cation used as cofactor. In presence of Mg(2+), only shows 3'-5' exoribonuclease activity, while it shows both exoribonuclease and exodeoxyribonuclease activities in presence of Mn(2+). Acts as an exoribonuclease in mitochondrion, possibly by regulating ATP production and mitochondrial translation. Also involved in the response to DNA damage. Acts as 3'-5' exodeoxyribonuclease for double-strand breaks resection and efficient homologous recombination. Plays a key role in controlling the initial steps of chromosomal break repair, it is recruited to chromatin in a damage-dependent manner and functionally interacts with the MRN complex to accelerate resection through its 3'-5' exonuclease activity, which efficiently processes double-stranded DNA substrates containing nicks. Also involved in response to replicative stress: recruited to stalled forks and is required to stabilize and restart stalled replication forks by restraining excessive fork regression, thereby suppressing their degradation. This chain is Exonuclease 3'-5' domain-containing protein 2, found in Mus musculus (Mouse).